A 238-amino-acid chain; its full sequence is Protein A47 (238 aa).

This sequence belongs to the orthopoxvirus A47 protein family.

This Vaccinia virus (strain Ankara) (VACV) protein is Protein A47.